We begin with the raw amino-acid sequence, 259 residues long: UPF0246 protein NGK_0633 (259 aa).

Belongs to the UPF0246 family.

The sequence is that of UPF0246 protein NGK_0633 from Neisseria gonorrhoeae (strain NCCP11945).